The chain runs to 283 residues: Nucleotide-binding protein ABBFA_002973 (283 aa).

9–16 (GQSGSGKS) serves as a coordination point for ATP. 59–62 (DVRS) lines the GTP pocket.

It belongs to the RapZ-like family.

In terms of biological role, displays ATPase and GTPase activities. The polypeptide is Nucleotide-binding protein ABBFA_002973 (Acinetobacter baumannii (strain AB307-0294)).